Reading from the N-terminus, the 492-residue chain is ATP synthase subunit beta, chloroplastic (492 aa).

Position 170 to 177 (170 to 177) interacts with ATP; sequence GGAGVGKT.

It belongs to the ATPase alpha/beta chains family. In terms of assembly, F-type ATPases have 2 components, CF(1) - the catalytic core - and CF(0) - the membrane proton channel. CF(1) has five subunits: alpha(3), beta(3), gamma(1), delta(1), epsilon(1). CF(0) has four main subunits: a(1), b(1), b'(1) and c(9-12).

It is found in the plastid. The protein localises to the chloroplast thylakoid membrane. It carries out the reaction ATP + H2O + 4 H(+)(in) = ADP + phosphate + 5 H(+)(out). Its function is as follows. Produces ATP from ADP in the presence of a proton gradient across the membrane. The catalytic sites are hosted primarily by the beta subunits. This is ATP synthase subunit beta, chloroplastic from Angiopteris evecta (Mule's foot fern).